The following is a 474-amino-acid chain: tRNA-2-methylthio-N(6)-dimethylallyladenosine synthase (474 aa).

The MTTase N-terminal domain maps to 3–120 (KKLLIKTWGC…LPEMIKQSQS (118 aa)). Positions 12, 49, 83, 157, 161, and 164 each coordinate [4Fe-4S] cluster. The Radical SAM core domain occupies 143–375 (RAEGATAFVS…QQQINAQAMR (233 aa)). The TRAM domain maps to 378–441 (RLMLGTEQRV…ANSLRGEIVR (64 aa)).

The protein belongs to the methylthiotransferase family. MiaB subfamily. Monomer. [4Fe-4S] cluster serves as cofactor.

The protein resides in the cytoplasm. The catalysed reaction is N(6)-dimethylallyladenosine(37) in tRNA + (sulfur carrier)-SH + AH2 + 2 S-adenosyl-L-methionine = 2-methylsulfanyl-N(6)-dimethylallyladenosine(37) in tRNA + (sulfur carrier)-H + 5'-deoxyadenosine + L-methionine + A + S-adenosyl-L-homocysteine + 2 H(+). Its function is as follows. Catalyzes the methylthiolation of N6-(dimethylallyl)adenosine (i(6)A), leading to the formation of 2-methylthio-N6-(dimethylallyl)adenosine (ms(2)i(6)A) at position 37 in tRNAs that read codons beginning with uridine. In Vibrio vulnificus (strain YJ016), this protein is tRNA-2-methylthio-N(6)-dimethylallyladenosine synthase.